A 69-amino-acid polypeptide reads, in one-letter code: Probable rubredoxin HupI (69 aa).

The Rubredoxin-like domain maps to 16–67 (VTRLECGICWTVYDPADGDDVAQIAPGTPFAALPEEWHCPNCDAPKSKFMAI). Fe cation contacts are provided by Cys-21, Cys-24, Cys-54, and Cys-57.

This sequence belongs to the rubredoxin family. Fe(3+) is required as a cofactor.

Could be an electron transport intermediate in hydrogen oxidation. The polypeptide is Probable rubredoxin HupI (hupI) (Bradyrhizobium diazoefficiens (strain JCM 10833 / BCRC 13528 / IAM 13628 / NBRC 14792 / USDA 110)).